Consider the following 500-residue polypeptide: Probable cytosol aminopeptidase (500 aa).

Mn(2+) contacts are provided by Lys265 and Asp270. Residue Lys277 is part of the active site. Residues Asp288, Asp347, and Glu349 each contribute to the Mn(2+) site. Arg351 is an active-site residue.

It belongs to the peptidase M17 family. The cofactor is Mn(2+).

The protein localises to the cytoplasm. The enzyme catalyses Release of an N-terminal amino acid, Xaa-|-Yaa-, in which Xaa is preferably Leu, but may be other amino acids including Pro although not Arg or Lys, and Yaa may be Pro. Amino acid amides and methyl esters are also readily hydrolyzed, but rates on arylamides are exceedingly low.. It catalyses the reaction Release of an N-terminal amino acid, preferentially leucine, but not glutamic or aspartic acids.. Its function is as follows. Presumably involved in the processing and regular turnover of intracellular proteins. Catalyzes the removal of unsubstituted N-terminal amino acids from various peptides. This Corynebacterium diphtheriae (strain ATCC 700971 / NCTC 13129 / Biotype gravis) protein is Probable cytosol aminopeptidase.